The sequence spans 256 residues: Phosphomannomutase (256 aa).

Asp-12 functions as the Nucleophile in the catalytic mechanism. Residues Asp-12 and Asp-14 each contribute to the Mg(2+) site. The active-site Proton donor/acceptor is Asp-14. Residues Arg-21, Arg-123, Arg-134, Arg-141, Ser-179, and Asp-181 each contribute to the alpha-D-mannose 1-phosphate site. A Mg(2+)-binding site is contributed by Asp-209.

The protein belongs to the eukaryotic PMM family. In terms of assembly, homodimer.

It is found in the cytoplasm. The enzyme catalyses alpha-D-mannose 1-phosphate = D-mannose 6-phosphate. Its pathway is nucleotide-sugar biosynthesis; GDP-alpha-D-mannose biosynthesis; alpha-D-mannose 1-phosphate from D-fructose 6-phosphate: step 2/2. Functionally, involved in the synthesis of the GDP-mannose and dolichol-phosphate-mannose required for a number of critical mannosyl transfer reactions. This chain is Phosphomannomutase (SEC53), found in Encephalitozoon cuniculi (strain GB-M1) (Microsporidian parasite).